The primary structure comprises 687 residues: Elongation factor G (687 aa).

Positions 8-282 (NKFRNIGIMA…AVLAYLPSPL (275 aa)) constitute a tr-type G domain. GTP contacts are provided by residues 17 to 24 (AHIDAGKT), 81 to 85 (DTPGH), and 135 to 138 (NKMD).

It belongs to the TRAFAC class translation factor GTPase superfamily. Classic translation factor GTPase family. EF-G/EF-2 subfamily.

It localises to the cytoplasm. Catalyzes the GTP-dependent ribosomal translocation step during translation elongation. During this step, the ribosome changes from the pre-translocational (PRE) to the post-translocational (POST) state as the newly formed A-site-bound peptidyl-tRNA and P-site-bound deacylated tRNA move to the P and E sites, respectively. Catalyzes the coordinated movement of the two tRNA molecules, the mRNA and conformational changes in the ribosome. This is Elongation factor G from Clostridium novyi (strain NT).